Here is a 729-residue protein sequence, read N- to C-terminus: Catalase-peroxidase (729 aa).

Positions 1-20 (MHNGSNGSVEQRDSMPETSR) are disordered. Basic and acidic residues predominate over residues 10-20 (EQRDSMPETSR). The tryptophyl-tyrosyl-methioninium (Trp-Tyr) (with M-240) cross-link spans 91-214 (WHAAGTYRTT…LGATVMGLIY (124 aa)). Residue histidine 92 is the Proton acceptor of the active site. A cross-link (tryptophyl-tyrosyl-methioninium (Tyr-Met) (with W-91)) is located at residues 214 to 240 (YVNPEGPESTPDPEWSAQRIRKSFGRM). Residue histidine 255 participates in heme b binding.

Belongs to the peroxidase family. Peroxidase/catalase subfamily. In terms of assembly, homodimer or homotetramer. Heme b serves as cofactor. In terms of processing, formation of the three residue Trp-Tyr-Met cross-link is important for the catalase, but not the peroxidase activity of the enzyme.

It catalyses the reaction H2O2 + AH2 = A + 2 H2O. It carries out the reaction 2 H2O2 = O2 + 2 H2O. Functionally, bifunctional enzyme with both catalase and broad-spectrum peroxidase activity. In Salinibacter ruber (strain DSM 13855 / M31), this protein is Catalase-peroxidase.